Here is a 388-residue protein sequence, read N- to C-terminus: Formate-dependent phosphoribosylglycinamide formyltransferase (388 aa).

N(1)-(5-phospho-beta-D-ribosyl)glycinamide-binding positions include 11-12 and E71; that span reads EL. ATP contacts are provided by residues R103, K144, 149–154, 184–187, and E192; these read SSGKGQ and EEFI. Residues 108–300 enclose the ATP-grasp domain; it reads DLAAKELGLK…EFELHLRAVL (193 aa). Mg(2+) is bound by residues E257 and E270. N(1)-(5-phospho-beta-D-ribosyl)glycinamide contacts are provided by residues D277, K349, and 356-357; that span reads RR.

This sequence belongs to the PurK/PurT family. In terms of assembly, homodimer.

It carries out the reaction N(1)-(5-phospho-beta-D-ribosyl)glycinamide + formate + ATP = N(2)-formyl-N(1)-(5-phospho-beta-D-ribosyl)glycinamide + ADP + phosphate + H(+). It participates in purine metabolism; IMP biosynthesis via de novo pathway; N(2)-formyl-N(1)-(5-phospho-D-ribosyl)glycinamide from N(1)-(5-phospho-D-ribosyl)glycinamide (formate route): step 1/1. Involved in the de novo purine biosynthesis. Catalyzes the transfer of formate to 5-phospho-ribosyl-glycinamide (GAR), producing 5-phospho-ribosyl-N-formylglycinamide (FGAR). Formate is provided by PurU via hydrolysis of 10-formyl-tetrahydrofolate. The chain is Formate-dependent phosphoribosylglycinamide formyltransferase from Bacteroides fragilis (strain ATCC 25285 / DSM 2151 / CCUG 4856 / JCM 11019 / LMG 10263 / NCTC 9343 / Onslow / VPI 2553 / EN-2).